Consider the following 775-residue polypeptide: MVYAHNLGFPRIGIKREMKKTVEAYWRGEISQQQLQQQAIELQLTNWKIQAEAGVDLIPVGDFSWYDHVLDMAVRVGAIPSRFKALNSNITDTMFCTARGQAPNGIETSACEMTKWFDTNYHYIVPEFTTNQSFELHHDDLFKSTKLALENNYRAKPVILGPLSFLWLGKCKGESFNKLLLLEKLLPVYAEIFEQLSSLGVEWVQVDEPILVLDLPPEWQQAFLTTYQQLNFFNLKCLLATYFGSLDDNLSLTCQLPVDGLHIDYCRAPDQLDSVLSQLPAEKILSVGIVDGRNIWCNDLNRSLTLLENIQSSLGDRLWVAPSCSLLHVPIDLDQENKLDVELKSWFAFAKQKVAEAAFLTRGLREGRESIGAELKKNEEVIISRKTSKRIHNPNVEKKAASVNERLMRRQHEHSIRKNKQTAQLNLPLFPTTTIGSFPQTSKIRCLRRDYKQGKIDDALYEEKIRQEIAEVIGIQVKLGLDVLVHGEPERNDMVEYFGELLDGIAITSNGWVQSYGSRCVKPPIIFGDVSRERPMTLRWIEYAQSLTTKSVKGMLTGPVTILAWSFVRDDQPRSQTAKQIALALRDEVQDLERSGVRVIQIDEPAFRECLPLRKAAWQDYLEWAVKCFRLASCGVKDETQIHTHMCYSEFNDIIEAIAALDADVITIESSRSEMEILKSFEKFAYPNDIGPGIYDIHSPRIPRVAEIEELAVRALQYIPIERLWINPDCGLKTRNWEETKEALSRMVDAAKHLRKAFSSEKTPTIDLELQPAST.

5-methyltetrahydropteroyltri-L-glutamate contacts are provided by residues arginine 16–lysine 19 and lysine 115. Residues isoleucine 435–serine 437 and glutamate 488 each bind L-homocysteine. Residues isoleucine 435–serine 437 and glutamate 488 each bind L-methionine. 5-methyltetrahydropteroyltri-L-glutamate contacts are provided by residues arginine 519–cysteine 520 and tryptophan 565. Position 603 (aspartate 603) interacts with L-homocysteine. Residue aspartate 603 participates in L-methionine binding. Position 609 (glutamate 609) interacts with 5-methyltetrahydropteroyltri-L-glutamate. The Zn(2+) site is built by histidine 645, cysteine 647, and glutamate 669. Histidine 698 acts as the Proton donor in catalysis. Cysteine 730 is a binding site for Zn(2+).

It belongs to the vitamin-B12 independent methionine synthase family. Requires Zn(2+) as cofactor.

The catalysed reaction is 5-methyltetrahydropteroyltri-L-glutamate + L-homocysteine = tetrahydropteroyltri-L-glutamate + L-methionine. Its pathway is amino-acid biosynthesis; L-methionine biosynthesis via de novo pathway; L-methionine from L-homocysteine (MetE route): step 1/1. Its function is as follows. Catalyzes the transfer of a methyl group from 5-methyltetrahydrofolate to homocysteine resulting in methionine formation. In Coxiella burnetii (strain CbuG_Q212) (Coxiella burnetii (strain Q212)), this protein is 5-methyltetrahydropteroyltriglutamate--homocysteine methyltransferase.